A 459-amino-acid chain; its full sequence is Bifunctional protein GlmU (459 aa).

Residues 1–230 form a pyrophosphorylase region; sequence MVKRYAVILA…FEETIGVNDR (230 aa). Residues 9-12, Lys-23, Gln-73, and 78-79 each bind UDP-N-acetyl-alpha-D-glucosamine; these read LAAG and GT. Mg(2+) is bound at residue Asp-103. 4 residues coordinate UDP-N-acetyl-alpha-D-glucosamine: Gly-140, Glu-155, Asn-170, and Asn-228. Mg(2+) is bound at residue Asn-228. Residues 231 to 251 are linker; the sequence is VALAEAEKIMRERICRKHMMN. Positions 252–459 are N-acetyltransferase; the sequence is GVTIIDPAHT…VDRLSIKKNS (208 aa). Positions 333 and 351 each coordinate UDP-N-acetyl-alpha-D-glucosamine. His-363 (proton acceptor) is an active-site residue. UDP-N-acetyl-alpha-D-glucosamine is bound by residues Tyr-366 and Asn-377. Acetyl-CoA contacts are provided by residues 386-387, Ala-423, and Arg-440; that span reads NY.

It in the N-terminal section; belongs to the N-acetylglucosamine-1-phosphate uridyltransferase family. The protein in the C-terminal section; belongs to the transferase hexapeptide repeat family. In terms of assembly, homotrimer. Requires Mg(2+) as cofactor.

The protein resides in the cytoplasm. The enzyme catalyses alpha-D-glucosamine 1-phosphate + acetyl-CoA = N-acetyl-alpha-D-glucosamine 1-phosphate + CoA + H(+). It carries out the reaction N-acetyl-alpha-D-glucosamine 1-phosphate + UTP + H(+) = UDP-N-acetyl-alpha-D-glucosamine + diphosphate. It functions in the pathway nucleotide-sugar biosynthesis; UDP-N-acetyl-alpha-D-glucosamine biosynthesis; N-acetyl-alpha-D-glucosamine 1-phosphate from alpha-D-glucosamine 6-phosphate (route II): step 2/2. The protein operates within nucleotide-sugar biosynthesis; UDP-N-acetyl-alpha-D-glucosamine biosynthesis; UDP-N-acetyl-alpha-D-glucosamine from N-acetyl-alpha-D-glucosamine 1-phosphate: step 1/1. It participates in bacterial outer membrane biogenesis; LPS lipid A biosynthesis. Catalyzes the last two sequential reactions in the de novo biosynthetic pathway for UDP-N-acetylglucosamine (UDP-GlcNAc). The C-terminal domain catalyzes the transfer of acetyl group from acetyl coenzyme A to glucosamine-1-phosphate (GlcN-1-P) to produce N-acetylglucosamine-1-phosphate (GlcNAc-1-P), which is converted into UDP-GlcNAc by the transfer of uridine 5-monophosphate (from uridine 5-triphosphate), a reaction catalyzed by the N-terminal domain. This is Bifunctional protein GlmU from Geobacillus sp. (strain WCH70).